A 329-amino-acid polypeptide reads, in one-letter code: Cytochrome f (329 aa).

The N-terminal stretch at 1 to 44 (MKRNIIFLVIHQFENLTMKKKQNIFFIFLLTVFFNFTVNSNVSA) is a signal peptide. Residues Tyr-45, Cys-65, Cys-68, and His-69 each contribute to the heme site. A helical membrane pass occupies residues 295-315 (VQGLIIFLITIFITQLFLVLK).

The protein belongs to the cytochrome f family. The 4 large subunits of the cytochrome b6-f complex are cytochrome b6, subunit IV (17 kDa polypeptide, petD), cytochrome f and the Rieske protein, while the 4 small subunits are PetG, PetL, PetM and PetN. The complex functions as a dimer. It depends on heme as a cofactor.

The protein localises to the plastid. It is found in the chloroplast thylakoid membrane. Its function is as follows. Component of the cytochrome b6-f complex, which mediates electron transfer between photosystem II (PSII) and photosystem I (PSI), cyclic electron flow around PSI, and state transitions. This is Cytochrome f from Tupiella akineta (Green alga).